Consider the following 338-residue polypeptide: MIASEIFERGVQDPFCQDCDYEDETDVQSFLGSNDLNDFVNSKLASFSFENSSKSNNSHHSSSTNAGNTSRHIGNHTIGHHLRKIKTAPHHLYGFVPANSTNNSNEPIRPSPRRIRANSSTLIHQLSRQSTRQSSLGDAADSCFDHKCIKPRSRHSSCYGIPTHLYGLEKYVSSELDSLAVANDQSNDLTSPLTSVSTPASNSNSYLNLNSSSAAYPSSYLSNEKNNRLKLISHGKISSNNVPGHSGNLNHYHRERTPSNLRRESFSLLSNGSSSSPLQTRNNSYSNSLVKSPSNSSLNTSVASSNEESSPHTSNCLEERNPRRKSFIKLSLASSFSN.

Residues 50–70 (ENSSKSNNSHHSSSTNAGNTS) show a composition bias toward low complexity. The tract at residues 50-72 (ENSSKSNNSHHSSSTNAGNTSRH) is disordered. Ser-119 carries the phosphoserine modification. A compositionally biased stretch (low complexity) spans 267-306 (SLLSNGSSSSPLQTRNNSYSNSLVKSPSNSSLNTSVASSN). The interval 267-322 (SLLSNGSSSSPLQTRNNSYSNSLVKSPSNSSLNTSVASSNEESSPHTSNCLEERNP) is disordered. Polar residues predominate over residues 307–316 (EESSPHTSNC).

This sequence belongs to the ISF1/MBR1 family.

Its function is as follows. Could influence the NAM7/UPF1 function, possibly at the level of mRNA turnover. Participates in mitochondrial biogenesis. The polypeptide is Increasing suppression factor 1 (ISF1) (Saccharomyces cerevisiae (strain JAY291) (Baker's yeast)).